The chain runs to 113 residues: Ig heavy chain V-III region T957 (113 aa).

The Ig-like domain occupies 1–113; sequence EVKLEESGGG…YWGQGTLVTV (113 aa). Residues C22 and C98 are joined by a disulfide bond.

In Mus musculus (Mouse), this protein is Ig heavy chain V-III region T957.